The chain runs to 339 residues: DNA-directed RNA polymerase subunit alpha (339 aa).

The segment at 1 to 233 is alpha N-terminal domain (alpha-NTD); it reads MVREEVAGST…DLFLPFLHAE (233 aa). The alpha C-terminal domain (alpha-CTD) stretch occupies residues 264–339; that stretch reads KKGIPLNCIF…IDLLKNKLSF (76 aa).

It belongs to the RNA polymerase alpha chain family. In plastids the minimal PEP RNA polymerase catalytic core is composed of four subunits: alpha, beta, beta', and beta''. When a (nuclear-encoded) sigma factor is associated with the core the holoenzyme is formed, which can initiate transcription.

It is found in the plastid. It localises to the chloroplast. It catalyses the reaction RNA(n) + a ribonucleoside 5'-triphosphate = RNA(n+1) + diphosphate. Functionally, DNA-dependent RNA polymerase catalyzes the transcription of DNA into RNA using the four ribonucleoside triphosphates as substrates. In Bromus inermis (Smooth brome grass), this protein is DNA-directed RNA polymerase subunit alpha.